The sequence spans 266 residues: MRLIPLLTPDQVGKWAARHIVNRINAFKPTADRPFVLGLPTGGTPLEAYKHLIDMHKAGQVSFKHVVTFNMDEYVGLPTEHPESYHSFMHRNFFDHVDISSENINLLNGNAADIDAECHQYEEKIRAYGKIHLFMGGVGNDGHIAFNEPASSLASRTRIKTLTHDTRIANSRFFGGDVNQVPKYALTVGVGTLLDAEEVMILVTGHLKAQALQAAVEGNVNHMWTISCLQLHAKGIVVCDEPATMELKMKTVKYFREMEAENIKHL.

Aspartate 72 (proton acceptor; for enolization step) is an active-site residue. The active-site For ring-opening step is the aspartate 141. The active-site Proton acceptor; for ring-opening step is the histidine 143. Glutamate 148 serves as the catalytic For ring-opening step.

The protein belongs to the glucosamine/galactosamine-6-phosphate isomerase family. NagB subfamily. In terms of assembly, homohexamer.

It catalyses the reaction alpha-D-glucosamine 6-phosphate + H2O = beta-D-fructose 6-phosphate + NH4(+). It functions in the pathway amino-sugar metabolism; N-acetylneuraminate degradation; D-fructose 6-phosphate from N-acetylneuraminate: step 5/5. Its activity is regulated as follows. Allosterically activated by N-acetylglucosamine 6-phosphate (GlcNAc6P). In terms of biological role, catalyzes the reversible isomerization-deamination of glucosamine 6-phosphate (GlcN6P) to form fructose 6-phosphate (Fru6P) and ammonium ion. The sequence is that of Glucosamine-6-phosphate deaminase from Erwinia tasmaniensis (strain DSM 17950 / CFBP 7177 / CIP 109463 / NCPPB 4357 / Et1/99).